Reading from the N-terminus, the 189-residue chain is Ribosome-recycling factor (189 aa).

The protein belongs to the RRF family.

The protein resides in the cytoplasm. Responsible for the release of ribosomes from messenger RNA at the termination of protein biosynthesis. May increase the efficiency of translation by recycling ribosomes from one round of translation to another. The chain is Ribosome-recycling factor from Salinibacter ruber (strain DSM 13855 / M31).